The sequence spans 156 residues: Phosphopantetheine adenylyltransferase (156 aa).

This sequence belongs to the eukaryotic CoaD family.

Its subcellular location is the cytoplasm. It catalyses the reaction (R)-4'-phosphopantetheine + ATP + H(+) = 3'-dephospho-CoA + diphosphate. The protein operates within cofactor biosynthesis; coenzyme A biosynthesis. Functionally, reversibly transfers an adenylyl group from ATP to 4'-phosphopantetheine, yielding dephospho-CoA (dPCoA) and pyrophosphate. The chain is Phosphopantetheine adenylyltransferase from Methanosarcina acetivorans (strain ATCC 35395 / DSM 2834 / JCM 12185 / C2A).